Consider the following 684-residue polypeptide: PAN2-PAN3 deadenylation complex subunit PAN3 (684 aa).

3 disordered regions span residues 1-38 (MLPP…RETA), 68-97 (DPST…PARE), and 112-146 (VPKG…STGL). Positions 21-38 (EKAKEKEKKHSPEKRETA) are enriched in basic and acidic residues. The C3H1-type zinc-finger motif lies at 36–65 (ETAQRICRNVMIYGYCKYQDQGCIYYHPPA). Pro residues predominate over residues 127–139 (VPTPSAPTPPVWP). The interval 263-544 (GANGASAPGL…SIDEVVKMMG (282 aa)) is pseudokinase domain. ATP is bound by residues R326 and 375 to 382 (DYHPLSTT). Residues 387 to 412 (YLSPNPPEPSPASALANQPPKRRSSP) form a disordered region. Residue 444–445 (SK) coordinates ATP. A coiled-coil region spans residues 545-583 (PRILNELDAVQSYADVLENELGAEVENGRIVRLLTKLGF). Positions 584-684 (INERAEFELD…NAGNNHRVHR (101 aa)) are knob domain.

Belongs to the protein kinase superfamily. PAN3 family. Homodimer. Forms a heterotrimer with a catalytic subunit PAN2 to form the poly(A)-nuclease (PAN) deadenylation complex. Interacts (via PAM-2 motif) with poly(A)-binding protein PAB1 (via PABC domain), conferring substrate specificity of the enzyme complex.

The protein resides in the cytoplasm. Its function is as follows. Regulatory subunit of the poly(A)-nuclease (PAN) deadenylation complex, one of two cytoplasmic mRNA deadenylases involved in mRNA turnover. PAN specifically shortens poly(A) tails of RNA and the activity is stimulated by poly(A)-binding protein PAB1. PAN deadenylation is followed by rapid degradation of the shortened mRNA tails by the CCR4-NOT complex. Deadenylated mRNAs are then degraded by two alternative mechanisms, namely exosome-mediated 3'-5' exonucleolytic degradation, or deadenylation-dependent mRNA decaping and subsequent 5'-3' exonucleolytic degradation by XRN1. May also be involved in post-transcriptional maturation of mRNA poly(A) tails. PAN3 acts as a positive regulator for PAN activity, recruiting the catalytic subunit PAN2 to mRNA via its interaction with RNA and with PAB1. This Cryptococcus neoformans var. neoformans serotype D (strain B-3501A) (Filobasidiella neoformans) protein is PAN2-PAN3 deadenylation complex subunit PAN3.